Reading from the N-terminus, the 202-residue chain is Probable chemoreceptor glutamine deamidase CheD (202 aa).

The protein belongs to the CheD family.

The enzyme catalyses L-glutaminyl-[protein] + H2O = L-glutamyl-[protein] + NH4(+). Its function is as follows. Probably deamidates glutamine residues to glutamate on methyl-accepting chemotaxis receptors (MCPs), playing an important role in chemotaxis. The protein is Probable chemoreceptor glutamine deamidase CheD of Thiobacillus denitrificans (strain ATCC 25259 / T1).